We begin with the raw amino-acid sequence, 535 residues long: INSYN2B protein (535 aa).

Disordered regions lie at residues 23–85 (LVKQ…SFPR), 215–346 (EARE…RSSS), and 360–387 (KLPS…PRQE). Over residues 46–59 (KNPTGVTEVNTQTP) the composition is skewed to polar residues. The span at 219–232 (SALSPESSAEESNS) shows a compositional bias: low complexity. Polar residues-rich tracts occupy residues 258–269 (CSNTNSSASNMP), 307–319 (RTHS…SRSQ), and 361–375 (LPSQ…TGVG). Residues 411 to 448 (DLQGRLQSVEESLHSNQEKIKVLLNVIQDLEKAHALTE) adopt a coiled-coil conformation. Positions 493–528 (LEEAEPTEEAPSPPKSPAEAPVPEKQDLRRKSKKVK) are disordered.

It belongs to the INSYN2 family.

This is INSYN2B protein (Insyn2b) from Mus musculus (Mouse).